A 249-amino-acid chain; its full sequence is Superoxide dismutase 1 copper chaperone (249 aa).

Residues 6-69 (TYEATYAIPM…TLRNCGKDAI (64 aa)) enclose the HMA domain. Histidine 16 is a binding site for Zn(2+). Residues cysteine 17 and cysteine 20 each contribute to the Cu cation site. A disulfide bond links cysteine 27 and cysteine 64. Cu cation is bound by residues cysteine 229 and cysteine 231.

It belongs to the CCS1 family. Homodimer, and heterodimer with apo-SOD1. Zinc-binding at His-16 of CCS1 and 'Glu-43' of apo-SOD1 is required for this heterodimerization. It depends on Cu(2+) as a cofactor.

The protein resides in the cytoplasm. It localises to the mitochondrion intermembrane space. Its function is as follows. Copper chaperone for apo superoxide dismutase 1 (SOD1). Binds copper ions and delivers them specifically to apo-SOD1. In Saccharomyces cerevisiae (strain ATCC 204508 / S288c) (Baker's yeast), this protein is Superoxide dismutase 1 copper chaperone (CCS1).